The chain runs to 550 residues: Arginine--tRNA ligase (550 aa).

The 'HIGH' region signature appears at 125–135 (ANPTGPLHIGH).

The protein belongs to the class-I aminoacyl-tRNA synthetase family. As to quaternary structure, monomer.

The protein localises to the cytoplasm. The enzyme catalyses tRNA(Arg) + L-arginine + ATP = L-arginyl-tRNA(Arg) + AMP + diphosphate. The protein is Arginine--tRNA ligase of Lawsonia intracellularis (strain PHE/MN1-00).